Consider the following 287-residue polypeptide: Phosphatidylserine decarboxylase proenzyme (287 aa).

Catalysis depends on charge relay system; for autoendoproteolytic cleavage activity residues Asp90, His147, and Ser253. The active-site Schiff-base intermediate with substrate; via pyruvic acid; for decarboxylase activity is Ser253. Residue Ser253 is modified to Pyruvic acid (Ser); by autocatalysis.

The protein belongs to the phosphatidylserine decarboxylase family. PSD-B subfamily. Prokaryotic type I sub-subfamily. Heterodimer of a large membrane-associated beta subunit and a small pyruvoyl-containing alpha subunit. It depends on pyruvate as a cofactor. Post-translationally, is synthesized initially as an inactive proenzyme. Formation of the active enzyme involves a self-maturation process in which the active site pyruvoyl group is generated from an internal serine residue via an autocatalytic post-translational modification. Two non-identical subunits are generated from the proenzyme in this reaction, and the pyruvate is formed at the N-terminus of the alpha chain, which is derived from the carboxyl end of the proenzyme. The autoendoproteolytic cleavage occurs by a canonical serine protease mechanism, in which the side chain hydroxyl group of the serine supplies its oxygen atom to form the C-terminus of the beta chain, while the remainder of the serine residue undergoes an oxidative deamination to produce ammonia and the pyruvoyl prosthetic group on the alpha chain. During this reaction, the Ser that is part of the protease active site of the proenzyme becomes the pyruvoyl prosthetic group, which constitutes an essential element of the active site of the mature decarboxylase.

The protein resides in the cell membrane. It catalyses the reaction a 1,2-diacyl-sn-glycero-3-phospho-L-serine + H(+) = a 1,2-diacyl-sn-glycero-3-phosphoethanolamine + CO2. Its pathway is phospholipid metabolism; phosphatidylethanolamine biosynthesis; phosphatidylethanolamine from CDP-diacylglycerol: step 2/2. Functionally, catalyzes the formation of phosphatidylethanolamine (PtdEtn) from phosphatidylserine (PtdSer). This chain is Phosphatidylserine decarboxylase proenzyme, found in Aliivibrio fischeri (strain MJ11) (Vibrio fischeri).